A 331-amino-acid polypeptide reads, in one-letter code: D-lactate dehydrogenase (331 aa).

NAD(+) contacts are provided by residues 156 to 157 (RI), aspartate 176, 206 to 207 (MP), 233 to 235 (TAR), and aspartate 259. The active site involves arginine 235. Residue glutamate 264 is part of the active site. The active-site Proton donor is histidine 296.

This sequence belongs to the D-isomer specific 2-hydroxyacid dehydrogenase family.

The catalysed reaction is (R)-lactate + NAD(+) = pyruvate + NADH + H(+). This Treponema pallidum (strain Nichols) protein is D-lactate dehydrogenase (ldhD).